Reading from the N-terminus, the 645-residue chain is Synaptotagmin-16 (645 aa).

Disordered regions lie at residues 102-121, 144-192, and 206-344; these read AQNSSPSLSQHAKDSCSTMS, EHHL…DSDE, and QSFR…PSGV. A compositionally biased stretch (polar residues) spans 167-177; sequence ETVNGKKQVNS. Over residues 179–192 the composition is skewed to acidic residues; that stretch reads GDDEELSTSSDSDE. Residues 287-303 are compositionally biased toward polar residues; it reads HQESSVVQSLRRQSTEG. Positions 350–469 constitute a C2 1 domain; it reads KCGDLDVIFE…HPEGEMKVTL (120 aa). Positions 478–503 are disordered; sequence SSGGSPLSPSAVSHSDSTSSTQSLSH. The span at 485–502 shows a compositional bias: low complexity; the sequence is SPSAVSHSDSTSSTQSLS. Residues 505–640 enclose the C2 2 domain; sequence GAPELLVGLS…TKGQQICRWH (136 aa).

This sequence belongs to the synaptotagmin family. As to quaternary structure, homodimer. Can also form heterodimers. In terms of tissue distribution, expressed in brain.

Its function is as follows. May be involved in the trafficking and exocytosis of secretory vesicles in non-neuronal tissues. Is Ca(2+)-independent. This is Synaptotagmin-16 (SYT16) from Homo sapiens (Human).